Reading from the N-terminus, the 103-residue chain is Large ribosomal subunit protein uL24 (103 aa).

This sequence belongs to the universal ribosomal protein uL24 family. As to quaternary structure, part of the 50S ribosomal subunit.

One of two assembly initiator proteins, it binds directly to the 5'-end of the 23S rRNA, where it nucleates assembly of the 50S subunit. Its function is as follows. One of the proteins that surrounds the polypeptide exit tunnel on the outside of the subunit. This chain is Large ribosomal subunit protein uL24, found in Synechococcus sp. (strain CC9311).